The chain runs to 736 residues: Microtubule-associated protein mu-2 (736 aa).

It belongs to the orthoreovirus mu-2 protein family. As to quaternary structure, interacts with protein mu-NS; in viral inclusions. Interacts with polymerase lambda-3; this interaction stimulates the ATPase activity of mu-2. Requires a divalent metal cation as cofactor.

The protein localises to the virion. Its subcellular location is the host cytoplasm. It localises to the host cytoskeleton. Functionally, minor inner capsid (core) component. Displays NTPase and RNA 5'-triphosphatase (RTPase) activities. ATP is the preferred substrate for hydrolysis. May function as a cofactor of polymerase lambda-3. Associates with microtubules and plays a role in the formation, structural organization and morphology of viral inclusions, where the assembly of cores and the replication of viral RNA occur. Together with mu-NS, recruits the other core proteins to these inclusions. The polypeptide is Microtubule-associated protein mu-2 (M1) (Mammalia (T2J)).